Reading from the N-terminus, the 422-residue chain is Adenylosuccinate synthetase (422 aa).

GTP contacts are provided by residues 11–17 (GDEGKGK) and 39–41 (GHT). Aspartate 12 (proton acceptor) is an active-site residue. Residues aspartate 12 and glycine 39 each contribute to the Mg(2+) site. Residues 12–15 (DEGK), 37–40 (NAGH), threonine 129, arginine 143, asparagine 219, threonine 234, and arginine 298 each bind IMP. The Proton donor role is filled by histidine 40. 294 to 300 (VTTGRKR) contacts substrate. GTP contacts are provided by residues arginine 300, 326 to 328 (KLD), and 411 to 413 (GTG).

It belongs to the adenylosuccinate synthetase family. In terms of assembly, homodimer. Requires Mg(2+) as cofactor.

The protein localises to the cytoplasm. It carries out the reaction IMP + L-aspartate + GTP = N(6)-(1,2-dicarboxyethyl)-AMP + GDP + phosphate + 2 H(+). It participates in purine metabolism; AMP biosynthesis via de novo pathway; AMP from IMP: step 1/2. Its function is as follows. Plays an important role in the de novo pathway and in the salvage pathway of purine nucleotide biosynthesis. Catalyzes the first committed step in the biosynthesis of AMP from IMP. In Talaromyces marneffei (strain ATCC 18224 / CBS 334.59 / QM 7333) (Penicillium marneffei), this protein is Adenylosuccinate synthetase.